A 461-amino-acid polypeptide reads, in one-letter code: Bifunctional protein GlmU (461 aa).

Positions 1 to 230 are pyrophosphorylase; that stretch reads MSKIHAVVLA…PEETLGVNDR (230 aa). UDP-N-acetyl-alpha-D-glucosamine-binding positions include 9–12, Lys-23, Gln-73, 78–79, 101–103, Gly-140, Glu-155, Asn-170, and Asn-228; these read LAAG, GT, and YGD. Asp-103 contacts Mg(2+). Asn-228 is a Mg(2+) binding site. The tract at residues 231-251 is linker; sequence VQLSEAEAYMKKRIMTGHMRN. An N-acetyltransferase region spans residues 252-461; the sequence is GVTIIDPTST…KMPRKGKKQS (210 aa). UDP-N-acetyl-alpha-D-glucosamine contacts are provided by Arg-333 and Lys-351. The active-site Proton acceptor is the His-363. UDP-N-acetyl-alpha-D-glucosamine contacts are provided by Tyr-366 and Asn-377. Acetyl-CoA is bound by residues 386-387, Ala-423, and Arg-440; that span reads NY.

The protein in the N-terminal section; belongs to the N-acetylglucosamine-1-phosphate uridyltransferase family. In the C-terminal section; belongs to the transferase hexapeptide repeat family. As to quaternary structure, homotrimer. Requires Mg(2+) as cofactor.

The protein localises to the cytoplasm. The catalysed reaction is alpha-D-glucosamine 1-phosphate + acetyl-CoA = N-acetyl-alpha-D-glucosamine 1-phosphate + CoA + H(+). The enzyme catalyses N-acetyl-alpha-D-glucosamine 1-phosphate + UTP + H(+) = UDP-N-acetyl-alpha-D-glucosamine + diphosphate. The protein operates within nucleotide-sugar biosynthesis; UDP-N-acetyl-alpha-D-glucosamine biosynthesis; N-acetyl-alpha-D-glucosamine 1-phosphate from alpha-D-glucosamine 6-phosphate (route II): step 2/2. Its pathway is nucleotide-sugar biosynthesis; UDP-N-acetyl-alpha-D-glucosamine biosynthesis; UDP-N-acetyl-alpha-D-glucosamine from N-acetyl-alpha-D-glucosamine 1-phosphate: step 1/1. It functions in the pathway bacterial outer membrane biogenesis; LPS lipid A biosynthesis. Functionally, catalyzes the last two sequential reactions in the de novo biosynthetic pathway for UDP-N-acetylglucosamine (UDP-GlcNAc). The C-terminal domain catalyzes the transfer of acetyl group from acetyl coenzyme A to glucosamine-1-phosphate (GlcN-1-P) to produce N-acetylglucosamine-1-phosphate (GlcNAc-1-P), which is converted into UDP-GlcNAc by the transfer of uridine 5-monophosphate (from uridine 5-triphosphate), a reaction catalyzed by the N-terminal domain. This Brevibacillus brevis (strain 47 / JCM 6285 / NBRC 100599) protein is Bifunctional protein GlmU.